A 264-amino-acid chain; its full sequence is Thiazole synthase (264 aa).

Catalysis depends on Lys-106, which acts as the Schiff-base intermediate with DXP. 1-deoxy-D-xylulose 5-phosphate contacts are provided by residues Gly-167, 193 to 194 (AG), and 215 to 216 (NT).

This sequence belongs to the ThiG family. Homotetramer. Forms heterodimers with either ThiH or ThiS.

Its subcellular location is the cytoplasm. The catalysed reaction is [ThiS sulfur-carrier protein]-C-terminal-Gly-aminoethanethioate + 2-iminoacetate + 1-deoxy-D-xylulose 5-phosphate = [ThiS sulfur-carrier protein]-C-terminal Gly-Gly + 2-[(2R,5Z)-2-carboxy-4-methylthiazol-5(2H)-ylidene]ethyl phosphate + 2 H2O + H(+). It participates in cofactor biosynthesis; thiamine diphosphate biosynthesis. Functionally, catalyzes the rearrangement of 1-deoxy-D-xylulose 5-phosphate (DXP) to produce the thiazole phosphate moiety of thiamine. Sulfur is provided by the thiocarboxylate moiety of the carrier protein ThiS. In vitro, sulfur can be provided by H(2)S. The polypeptide is Thiazole synthase (Stenotrophomonas maltophilia (strain R551-3)).